The primary structure comprises 109 residues: ATPase inhibitor, mitochondrial (109 aa).

The transit peptide at 1 to 25 (MAATALAARTRQAVWSVWAMQGRGF) directs the protein to the mitochondrion. The interval 26–52 (GSESGDNVRSSAGAVRDAGGAFGKREQ) is disordered. Positions 26 to 52 (GSESGDNVRSSAGAVRDAGGAFGKREQ) are N-terminal inhibitory region. Residues 69-109 (ALKKHHENEISHHAKEIERLQKEIERHKQSIKKLKQSEDDD) adopt a coiled-coil conformation. An antiparallel alpha-helical coiled coil region region spans residues 74-106 (HENEISHHAKEIERLQKEIERHKQSIKKLKQSE). Residue lysine 103 is modified to N6-succinyllysine.

Belongs to the ATPase inhibitor family. Homodimer; represents the active form and is present at a pH value below 6.5. Homotetramer; represents the inactive form and is present at a pH value above 7.0.

Its subcellular location is the mitochondrion. Functionally, endogenous F(1)F(o)-ATPase inhibitor limiting ATP depletion when the mitochondrial membrane potential falls below a threshold and the F(1)F(o)-ATP synthase starts hydrolyzing ATP to pump protons out of the mitochondrial matrix. Required to avoid the consumption of cellular ATP when the F(1)F(o)-ATP synthase enzyme acts as an ATP hydrolase. Indirectly acts as a regulator of heme synthesis in erythroid tissues: regulates heme synthesis by modulating the mitochondrial pH and redox potential, allowing FECH to efficiently catalyze the incorporation of iron into protoporphyrin IX to produce heme. This chain is ATPase inhibitor, mitochondrial, found in Bos taurus (Bovine).